The chain runs to 250 residues: 5-oxoprolinase subunit A (250 aa).

The protein belongs to the LamB/PxpA family. In terms of assembly, forms a complex composed of PxpA, PxpB and PxpC.

It carries out the reaction 5-oxo-L-proline + ATP + 2 H2O = L-glutamate + ADP + phosphate + H(+). Catalyzes the cleavage of 5-oxoproline to form L-glutamate coupled to the hydrolysis of ATP to ADP and inorganic phosphate. The polypeptide is 5-oxoprolinase subunit A (Klebsiella pneumoniae (strain 342)).